The chain runs to 109 residues: MAEMVARLASERAVVVFTKSGCCMCTAVTTLLGELAVSAAVHELDRDPLGKEMEKELARRLYGSSGRGGPAVPAVFIGGSLVGGTSKVMAMHLKGELVPLLKSAGALWL.

Positions 2–108 (AEMVARLASE…PLLKSAGALW (107 aa)) constitute a Glutaredoxin domain. A disulfide bond links Cys22 and Cys25. Residues 106 to 109 (ALWL) carry the Responsive for interaction with TGA factors motif.

It belongs to the glutaredoxin family. CC-type subfamily.

The protein localises to the cytoplasm. Its subcellular location is the nucleus. Its function is as follows. Has a glutathione-disulfide oxidoreductase activity in the presence of NADPH and glutathione reductase. Reduces low molecular weight disulfides and proteins. In Oryza sativa subsp. japonica (Rice), this protein is Putative glutaredoxin-C11 (GRXC11).